Here is a 482-residue protein sequence, read N- to C-terminus: Glutamate--tRNA ligase (482 aa).

Residues 9 to 19 carry the 'HIGH' region motif; it reads PSPTGYLHIGG. Positions 252–256 match the 'KMSKS' region motif; the sequence is KLSKR. Residue K255 coordinates ATP.

It belongs to the class-I aminoacyl-tRNA synthetase family. Glutamate--tRNA ligase type 1 subfamily. In terms of assembly, monomer.

The protein resides in the cytoplasm. The catalysed reaction is tRNA(Glu) + L-glutamate + ATP = L-glutamyl-tRNA(Glu) + AMP + diphosphate. Its function is as follows. Catalyzes the attachment of glutamate to tRNA(Glu) in a two-step reaction: glutamate is first activated by ATP to form Glu-AMP and then transferred to the acceptor end of tRNA(Glu). This chain is Glutamate--tRNA ligase, found in Ureaplasma parvum serovar 3 (strain ATCC 27815 / 27 / NCTC 11736).